A 185-amino-acid polypeptide reads, in one-letter code: Peptidyl-tRNA hydrolase (185 aa).

Position 14 (tyrosine 14) interacts with tRNA. The Proton acceptor role is filled by histidine 19. Residues tyrosine 65, asparagine 67, and asparagine 113 each coordinate tRNA.

It belongs to the PTH family. As to quaternary structure, monomer.

It localises to the cytoplasm. The enzyme catalyses an N-acyl-L-alpha-aminoacyl-tRNA + H2O = an N-acyl-L-amino acid + a tRNA + H(+). Functionally, hydrolyzes ribosome-free peptidyl-tRNAs (with 1 or more amino acids incorporated), which drop off the ribosome during protein synthesis, or as a result of ribosome stalling. In terms of biological role, catalyzes the release of premature peptidyl moieties from peptidyl-tRNA molecules trapped in stalled 50S ribosomal subunits, and thus maintains levels of free tRNAs and 50S ribosomes. In Rickettsia typhi (strain ATCC VR-144 / Wilmington), this protein is Peptidyl-tRNA hydrolase.